The chain runs to 459 residues: Argininosuccinate lyase (459 aa).

Belongs to the lyase 1 family. Argininosuccinate lyase subfamily.

It localises to the cytoplasm. The enzyme catalyses 2-(N(omega)-L-arginino)succinate = fumarate + L-arginine. It functions in the pathway amino-acid biosynthesis; L-arginine biosynthesis; L-arginine from L-ornithine and carbamoyl phosphate: step 3/3. The protein is Argininosuccinate lyase of Photorhabdus laumondii subsp. laumondii (strain DSM 15139 / CIP 105565 / TT01) (Photorhabdus luminescens subsp. laumondii).